We begin with the raw amino-acid sequence, 138 residues long: Large ribosomal subunit protein uL16 (138 aa).

This sequence belongs to the universal ribosomal protein uL16 family. In terms of assembly, part of the 50S ribosomal subunit.

Binds 23S rRNA and is also seen to make contacts with the A and possibly P site tRNAs. The sequence is that of Large ribosomal subunit protein uL16 from Paramagnetospirillum magneticum (strain ATCC 700264 / AMB-1) (Magnetospirillum magneticum).